A 360-amino-acid polypeptide reads, in one-letter code: Photosystem II protein D1 (360 aa).

The next 3 helical transmembrane spans lie at 29–46, 118–133, and 142–156; these read YIGW…TATT, HFLL…EWEL, and WICV…AATA. Residue histidine 118 participates in chlorophyll a binding. Position 126 (tyrosine 126) interacts with pheophytin a. [CaMn4O5] cluster is bound by residues aspartate 170 and glutamate 189. A helical transmembrane segment spans residues 197 to 218; the sequence is FHMAGVAGVFGGALFSAMHGSL. Histidine 198 contacts chlorophyll a. A quinone contacts are provided by residues histidine 215 and 264-265; that span reads SF. Histidine 215 provides a ligand contact to Fe cation. Fe cation is bound at residue histidine 272. Residues 274–288 traverse the membrane as a helical segment; sequence FLGLWPVVGIWLTSI. 4 residues coordinate [CaMn4O5] cluster: histidine 332, glutamate 333, aspartate 342, and alanine 344. The propeptide occupies 345–360; it reads DNSLLPVASSSPSINS.

It belongs to the reaction center PufL/M/PsbA/D family. PSII is composed of 1 copy each of membrane proteins PsbA, PsbB, PsbC, PsbD, PsbE, PsbF, PsbH, PsbI, PsbJ, PsbK, PsbL, PsbM, PsbT, PsbY, PsbZ, Psb30/Ycf12, at least 3 peripheral proteins of the oxygen-evolving complex and a large number of cofactors. It forms dimeric complexes. The cofactor is The D1/D2 heterodimer binds P680, chlorophylls that are the primary electron donor of PSII, and subsequent electron acceptors. It shares a non-heme iron and each subunit binds pheophytin, quinone, additional chlorophylls, carotenoids and lipids. D1 provides most of the ligands for the Mn4-Ca-O5 cluster of the oxygen-evolving complex (OEC). There is also a Cl(-1) ion associated with D1 and D2, which is required for oxygen evolution. The PSII complex binds additional chlorophylls, carotenoids and specific lipids.. Tyr-161 forms a radical intermediate that is referred to as redox-active TyrZ, YZ or Y-Z.

The protein resides in the plastid. It localises to the chloroplast thylakoid membrane. It carries out the reaction 2 a plastoquinone + 4 hnu + 2 H2O = 2 a plastoquinol + O2. Its function is as follows. Photosystem II (PSII) is a light-driven water:plastoquinone oxidoreductase that uses light energy to abstract electrons from H(2)O, generating O(2) and a proton gradient subsequently used for ATP formation. It consists of a core antenna complex that captures photons, and an electron transfer chain that converts photonic excitation into a charge separation. The D1/D2 (PsbA/PsbD) reaction center heterodimer binds P680, the primary electron donor of PSII as well as several subsequent electron acceptors. In Cyanidium caldarium (Red alga), this protein is Photosystem II protein D1.